The following is a 529-amino-acid chain: MKKIYNVYFLCGFATLGGGLFGFDISSMSGVLGTAAYTNYFQVGSGQYKQGSITCAMPFGSLVGALCSSFIADRYSRVRAIQFSSILWIIGSIFMCASNGIPLLVVGRVIAGGCVGIASAMVPVYQAEIAPKEIRGRVISLQQWAITWGILIQYFIQYGASNIDGGPNNPTQSTAAFRIPWGIQIVPGVILFFGMFLFPKSPRWLASKDRWEEALQVLSKLHGQGDVNHPKVLAEYKEIQEALALEREQSATGFQELIKPRIFKRVILGMSLQMWSQLCGMNVMMYYIVYIMQSTGAGSPLLTASIQYILNTALTLPAIIYLDKFGRRPAILIGFFLQAIFLYLEGGLQGGFGAPNPHTDPKLDAISWTVADHPAVGKAIIALSYLFVCSFATTIGPTSWTYPAEIYPAKVRAKAVSLATASNWIWNCLLALFVPPLLWSINWKMYMIFAAFNTAAFIHMFLTAPETKGYTLEEMDDVFDSGLPAWRKLERKSRMEELEKEIIEGNLKITPAHEATGVSATHVTPEKQV.

Transmembrane regions (helical) follow at residues 7–27, 52–72, 86–106, 109–129, 138–158, 179–199, 272–292, 301–321, 330–350, 375–395, 415–439, and 446–464; these read VYFL…DISS, SITC…SFIA, ILWI…LLVV, VIAG…QAEI, VISL…FIQY, IPWG…FLFP, LQMW…VYIM, LLTA…AIIY, AILI…GLQG, AVGK…ATTI, AVSL…PLLW, and YMIF…FLTA.

Belongs to the major facilitator superfamily. Sugar transporter (TC 2.A.1.1) family.

Its subcellular location is the membrane. In terms of biological role, probable MFS glucose transporter; part of the gene cluster 27 that mediates the biosynthesis of asparasone A, a sclerotium-specific anthraquinone pigment important for sclerotial survival. The sequence is that of MFS glucose transporter mfs1 from Aspergillus flavus (strain ATCC 200026 / FGSC A1120 / IAM 13836 / NRRL 3357 / JCM 12722 / SRRC 167).